We begin with the raw amino-acid sequence, 169 residues long: uncharacterized protein (169 aa).

Phosphoserine is present on Ser165.

This is an uncharacterized protein from Drosophila melanogaster (Fruit fly).